The sequence spans 211 residues: Thiamine-phosphate synthase (211 aa).

4-amino-2-methyl-5-(diphosphooxymethyl)pyrimidine is bound by residues 35 to 39 (QLRDK) and Asn-67. Asp-68 and Asp-87 together coordinate Mg(2+). Ser-106 is a binding site for 4-amino-2-methyl-5-(diphosphooxymethyl)pyrimidine. 132–134 (TGS) provides a ligand contact to 2-[(2R,5Z)-2-carboxy-4-methylthiazol-5(2H)-ylidene]ethyl phosphate. Lys-135 lines the 4-amino-2-methyl-5-(diphosphooxymethyl)pyrimidine pocket. Residues Gly-163 and 183–184 (IS) contribute to the 2-[(2R,5Z)-2-carboxy-4-methylthiazol-5(2H)-ylidene]ethyl phosphate site.

This sequence belongs to the thiamine-phosphate synthase family. It depends on Mg(2+) as a cofactor.

The enzyme catalyses 2-[(2R,5Z)-2-carboxy-4-methylthiazol-5(2H)-ylidene]ethyl phosphate + 4-amino-2-methyl-5-(diphosphooxymethyl)pyrimidine + 2 H(+) = thiamine phosphate + CO2 + diphosphate. It carries out the reaction 2-(2-carboxy-4-methylthiazol-5-yl)ethyl phosphate + 4-amino-2-methyl-5-(diphosphooxymethyl)pyrimidine + 2 H(+) = thiamine phosphate + CO2 + diphosphate. It catalyses the reaction 4-methyl-5-(2-phosphooxyethyl)-thiazole + 4-amino-2-methyl-5-(diphosphooxymethyl)pyrimidine + H(+) = thiamine phosphate + diphosphate. It functions in the pathway cofactor biosynthesis; thiamine diphosphate biosynthesis; thiamine phosphate from 4-amino-2-methyl-5-diphosphomethylpyrimidine and 4-methyl-5-(2-phosphoethyl)-thiazole: step 1/1. In terms of biological role, condenses 4-methyl-5-(beta-hydroxyethyl)thiazole monophosphate (THZ-P) and 2-methyl-4-amino-5-hydroxymethyl pyrimidine pyrophosphate (HMP-PP) to form thiamine monophosphate (TMP). This is Thiamine-phosphate synthase from Methanoculleus marisnigri (strain ATCC 35101 / DSM 1498 / JR1).